The primary structure comprises 211 residues: Thymidylate kinase (211 aa).

Residue 11-18 participates in ATP binding; that stretch reads GPDGAGKT.

This sequence belongs to the thymidylate kinase family.

It carries out the reaction dTMP + ATP = dTDP + ADP. Functionally, phosphorylation of dTMP to form dTDP in both de novo and salvage pathways of dTTP synthesis. In Streptococcus uberis (strain ATCC BAA-854 / 0140J), this protein is Thymidylate kinase.